The primary structure comprises 1628 residues: THO complex subunit 2 (1628 aa).

Basic and acidic residues-rich tracts occupy residues 1–10 (MTSLPEKDQQ) and 1360–1399 (TDNK…EGNR). Disordered stretches follow at residues 1-21 (MTSL…NQKK) and 1337-1628 (VALN…RKIQ). Thr1406 and Thr1408 each carry phosphothreonine. A compositionally biased stretch (basic and acidic residues) spans 1411 to 1429 (DIQRSDSKLREDQSRDRTP). Polar residues predominate over residues 1430–1444 (QSRSFTNENNDNLRS). Residues 1461 to 1474 (ARREHESQKSDRWR) show a composition bias toward basic and acidic residues. Residues 1476–1493 (NGNVNRNPRVSNNNSTNV) show a composition bias toward low complexity. Basic and acidic residues predominate over residues 1494 to 1526 (SRERSSEANHRTSNDNKRDEVTEGKDKNKRQDI). Polar residues predominate over residues 1527-1550 (SGESNSRQNNAISRAGRSNGSNRG). Residues 1551–1560 (NDSRDADGRR) show a composition bias toward basic and acidic residues. A Phosphoserine modification is found at Ser1577. Residues 1581–1628 (LREEDERENSRRRARQDDRRDRDSRQQRDRPRDRTSRSAREEKRRKIQ) show a composition bias toward basic and acidic residues.

It belongs to the THOC2 family. Component of the THO complex. THO associates with DNA and RNA in vitro.

Its subcellular location is the nucleus. Its function is as follows. Component the THO subcomplex of the TREX complex, which operates in coupling transcription elongation to mRNA export. The THO complex is recruited to transcribed genes and moves along the gene with the elongating polymerase during transcription. THO is important for stabilizing nascent RNA in the RNA polymerase II elongation complex by preventing formation of DNA:RNA hybrids behind the elongating polymerase. The chain is THO complex subunit 2 (tho2) from Schizosaccharomyces pombe (strain 972 / ATCC 24843) (Fission yeast).